The primary structure comprises 1097 residues: Cyclin-T (1097 aa).

Disordered stretches follow at residues 319-782 (SNIT…SNGI), 804-936 (LLKP…SLQA), and 985-1097 (AAPV…YNKK). Residues 332 to 350 (DSRDRDRDRERERERERDP) are compositionally biased toward basic and acidic residues. 4 stretches are compositionally biased toward low complexity: residues 373-390 (SSSV…SSSS), 420-456 (PSSH…GRPS), 467-478 (GMPPVGVGMPPH), and 489-511 (PQQP…SGMS). A compositionally biased stretch (polar residues) spans 580–591 (LPYSQSQSYGHM). The segment covering 592 to 606 (QQQPVPQSQQQQMPP) has biased composition (low complexity). The segment covering 609 to 620 (SQHSLQSKNSLF) has biased composition (polar residues). Residues 652–675 (HDYKLNSHPRDKESPKKERLTPTK) are compositionally biased toward basic and acidic residues. Residues 687–698 (GSGNSSSGSGSS) show a composition bias toward low complexity. Positions 860–870 (GEIKEESSSKS) are enriched in basic and acidic residues. A compositionally biased stretch (basic residues) spans 871–883 (EKKKKKDKHKHKE). Residues 884–895 (KDKSKDKTEKEE) show a composition bias toward basic and acidic residues. Ser916 carries the phosphoserine modification. Residues 993–1007 (GAGGGGYSSSGGSSS) show a composition bias toward gly residues. Over residues 1016 to 1031 (SDRDRDKESKKNKSQD) the composition is skewed to basic and acidic residues. The segment covering 1037-1050 (GAGGGIFNPLGGAG) has biased composition (gly residues). Residues 1087–1097 (APPPMPVYNKK) show a composition bias toward pro residues.

This sequence belongs to the cyclin family. Cyclin C subfamily. As to quaternary structure, component of the super elongation complex (SEC), at least composed of Ell, Cdk9, cyclin-T (CycT), lilli and ear. Associates with CDK9 to form P-TEFb.

The protein resides in the nucleus. In terms of biological role, regulatory subunit of the cyclin-dependent kinase pair (CDK9/cyclin T) complex, also called positive transcription elongation factor B (P-TEFb), which is proposed to facilitate the transition from abortive to production elongation by phosphorylating the CTD (carboxy-terminal domain) of the large subunit of RNA polymerase II (RNAP II). The polypeptide is Cyclin-T (CycT) (Drosophila melanogaster (Fruit fly)).